Reading from the N-terminus, the 102-residue chain is Co-chaperonin GroES (102 aa).

Belongs to the GroES chaperonin family. As to quaternary structure, heptamer of 7 subunits arranged in a ring. Interacts with the chaperonin GroEL.

The protein resides in the cytoplasm. In terms of biological role, together with the chaperonin GroEL, plays an essential role in assisting protein folding. The GroEL-GroES system forms a nano-cage that allows encapsulation of the non-native substrate proteins and provides a physical environment optimized to promote and accelerate protein folding. GroES binds to the apical surface of the GroEL ring, thereby capping the opening of the GroEL channel. The polypeptide is Co-chaperonin GroES (Streptomyces griseus subsp. griseus (strain JCM 4626 / CBS 651.72 / NBRC 13350 / KCC S-0626 / ISP 5235)).